The primary structure comprises 547 residues: CAP-Gly domain-containing linker protein 3 (547 aa).

The segment at 1–49 (MTKTDPAPMAPPPRGEEEEEEEEDEPVPEAPSPTQERRQKPVVHPSAPA) is disordered. A compositionally biased stretch (acidic residues) spans 16–27 (EEEEEEEEDEPV). 3 ANK repeats span residues 117 to 158 (TDMT…LRSR), 160 to 191 (TNMNALHYAAYFDVPDLVRVLLKGARPRVVNS), and 197 to 229 (NHGSALHIAASSLCLGAAKCLLEHGANPALRNR). The CAP-Gly 1 domain maps to 314–356 (GTTEFASGQWVGVELDEPEGKNDGSVGGVRYFICPPKQGLFAS). The interval 365-413 (DAPPSSVTSTPRTPRMDFSRVTGKGRREHKGKKKTPSSPSLGSLQQRDG) is disordered. Over residues 367 to 377 (PPSSVTSTPRT) the composition is skewed to low complexity. Threonine 374 bears the Phosphothreonine mark. A compositionally biased stretch (basic residues) spans 387 to 399 (GKGRREHKGKKKT). Over residues 400-410 (PSSPSLGSLQQ) the composition is skewed to polar residues. Serine 401 carries the phosphoserine modification. Residues 436-478 (GKTDFAPGYWYGIELDQPTGKHDGSVFGVRYFTCPPRHGVFAP) enclose the CAP-Gly 2 domain. The interval 488–547 (STDSPGDSVGAKKVHQVTMTQPKRTFTTVRTPKDIASENSISRLLFCCWFPWMLRAEMQS) is goLD. S-palmitoyl cysteine attachment occurs at residues cysteine 534 and cysteine 535.

Homodimer. Interacts with AKT1 and AKT2; when AKT1 and AKT2 are phosphorylated and activated, affinity is higher for AKT2. Interacts with ZDHHC13 (via ANK repeats). Interacts with ZDHHC17 (via ANK repeats). Palmitoylation by ZDHHC17 regulates association with the plasma membrane.

Its subcellular location is the cell membrane. The protein resides in the cytoplasm. It is found in the golgi apparatus. It localises to the golgi stack. Functionally, functions as a cytoplasmic linker protein. Involved in TGN-endosome dynamics. May modulate the cellular compartmentalization of AKT kinase family and promote its cell membrane localization, thereby playing a role in glucose transport in adipocytes. This is CAP-Gly domain-containing linker protein 3 (CLIP3) from Homo sapiens (Human).